A 310-amino-acid chain; its full sequence is Ribosomal RNA small subunit methyltransferase H (310 aa).

S-adenosyl-L-methionine contacts are provided by residues 32 to 34 (GGH), aspartate 52, phenylalanine 79, aspartate 100, and glutamine 107.

Belongs to the methyltransferase superfamily. RsmH family.

The protein localises to the cytoplasm. The catalysed reaction is cytidine(1402) in 16S rRNA + S-adenosyl-L-methionine = N(4)-methylcytidine(1402) in 16S rRNA + S-adenosyl-L-homocysteine + H(+). Its function is as follows. Specifically methylates the N4 position of cytidine in position 1402 (C1402) of 16S rRNA. The polypeptide is Ribosomal RNA small subunit methyltransferase H (Bacillus cereus (strain G9842)).